We begin with the raw amino-acid sequence, 31 residues long: Cytochrome b6-f complex subunit 6 (31 aa).

Residues 3 to 23 (TLTSYFGFLLVALTITLVLFI) traverse the membrane as a helical segment.

Belongs to the PetL family. As to quaternary structure, the 4 large subunits of the cytochrome b6-f complex are cytochrome b6, subunit IV (17 kDa polypeptide, PetD), cytochrome f and the Rieske protein, while the 4 small subunits are PetG, PetL, PetM and PetN. The complex functions as a dimer.

The protein localises to the plastid. Its subcellular location is the chloroplast thylakoid membrane. Its function is as follows. Component of the cytochrome b6-f complex, which mediates electron transfer between photosystem II (PSII) and photosystem I (PSI), cyclic electron flow around PSI, and state transitions. PetL is important for photoautotrophic growth as well as for electron transfer efficiency and stability of the cytochrome b6-f complex. The polypeptide is Cytochrome b6-f complex subunit 6 (Populus alba (White poplar)).